The sequence spans 74 residues: UPF0435 protein GWCH70_0415 (74 aa).

This sequence belongs to the UPF0435 family.

In Geobacillus sp. (strain WCH70), this protein is UPF0435 protein GWCH70_0415.